Reading from the N-terminus, the 344-residue chain is Sesquiterpene synthase 9 (344 aa).

The Mg(2+) site is built by D88, N224, S228, and E232. Positions 88–92 (DEYSD) match the DDXXD motif motif. An NSE/DTE motif motif is present at residues 224–232 (NDMLSWNVE). Positions 313 and 314 each coordinate (2E,6E)-farnesyl diphosphate.

It belongs to the terpene synthase family. Mg(2+) serves as cofactor.

Its function is as follows. Terpene cyclase that catalyzes the cyclization of farnesyl diphosphate (FPP) to a single major sesquiterpene scaffold whose chemical structure is still unknown. This Postia placenta (strain ATCC 44394 / Madison 698-R) (Brown rot fungus) protein is Sesquiterpene synthase 9.